Consider the following 209-residue polypeptide: Fibroblast growth factor 21 (209 aa).

Positions 1–28 (MDSDETGFEHSGLWVSVLAGLLLGACQA) are cleaved as a signal peptide. The tract at residues 143–209 (PLHLPGNKSP…SQGRSPSYAS (67 aa)) is disordered. A compositionally biased stretch (pro residues) spans 168-186 (PGLPPALPEPPGILAPQPP).

It belongs to the heparin-binding growth factors family. In terms of assembly, interacts (via C-terminus) with KLB; this interaction is direct. Interacts with FGFR4.

The protein resides in the secreted. Stimulates glucose uptake in differentiated adipocytes via the induction of glucose transporter SLC2A1/GLUT1 expression (but not SLC2A4/GLUT4 expression). Activity requires the presence of KLB. Regulates systemic glucose homeostasis and insulin sensitivity. In Homo sapiens (Human), this protein is Fibroblast growth factor 21 (FGF21).